The sequence spans 282 residues: UDP-3-O-acyl-N-acetylglucosamine deacetylase (282 aa).

Positions 74, 226, and 230 each coordinate Zn(2+). His253 functions as the Proton donor in the catalytic mechanism.

The protein belongs to the LpxC family. Requires Zn(2+) as cofactor.

The enzyme catalyses a UDP-3-O-[(3R)-3-hydroxyacyl]-N-acetyl-alpha-D-glucosamine + H2O = a UDP-3-O-[(3R)-3-hydroxyacyl]-alpha-D-glucosamine + acetate. Its pathway is glycolipid biosynthesis; lipid IV(A) biosynthesis; lipid IV(A) from (3R)-3-hydroxytetradecanoyl-[acyl-carrier-protein] and UDP-N-acetyl-alpha-D-glucosamine: step 2/6. Its function is as follows. Catalyzes the hydrolysis of UDP-3-O-myristoyl-N-acetylglucosamine to form UDP-3-O-myristoylglucosamine and acetate, the committed step in lipid A biosynthesis. The sequence is that of UDP-3-O-acyl-N-acetylglucosamine deacetylase from Aquifex aeolicus (strain VF5).